Reading from the N-terminus, the 184-residue chain is MNWRSERIWIEFLRGSRKISNFCWAFILFLGSLGFLLVGTSSYLGRDLISLFPSQQIIFFPQGIVMSFYGIAGLFISSYLWCTILWNVGSGYDRFDRKEEIVSIFRWGFPGKNRRIFLRFLMKDIQSIRIEVKEGIYARRVLYMEIRGQGAIPLTRTDQNLTPREIEQKAAELAYFLRVPIEVF.

The next 2 helical transmembrane spans lie at isoleucine 19–glycine 39 and isoleucine 57–serine 77.

This sequence belongs to the Ycf4 family.

The protein resides in the plastid. The protein localises to the chloroplast thylakoid membrane. Seems to be required for the assembly of the photosystem I complex. The protein is Photosystem I assembly protein Ycf4 of Cucumis sativus (Cucumber).